A 250-amino-acid chain; its full sequence is MENTIVIKLGGVASDNLTEGFFRQITEWQAANKKIVLVHGGGHYITKMMEALAIPVETKNGLRVTNKATLEVTKMVLIGQVQPAITTAFQKRNISVIGLNASDTGLLEADRLSDTDLGLVGKITKVKTNLIEQLLSENIITVIAPLGINSEHDWLNVNADTAACEVASALHAEALYLLTDVPGVKNGSEIIGEIATAEIEKLQSTGVIKGGMIPKLASAAFAAENGVGQVIITDSLNNSGTKIKNKVAIG.

Substrate-binding positions include 41 to 42, Arg-63, and Asn-156; that span reads GG.

This sequence belongs to the acetylglutamate kinase family. ArgB subfamily.

Its subcellular location is the cytoplasm. It catalyses the reaction N-acetyl-L-glutamate + ATP = N-acetyl-L-glutamyl 5-phosphate + ADP. It functions in the pathway amino-acid biosynthesis; L-arginine biosynthesis; N(2)-acetyl-L-ornithine from L-glutamate: step 2/4. Catalyzes the ATP-dependent phosphorylation of N-acetyl-L-glutamate. This is Acetylglutamate kinase from Listeria monocytogenes serovar 1/2a (strain ATCC BAA-679 / EGD-e).